The following is a 1010-amino-acid chain: Trifunctional purine biosynthetic protein adenosine-3 (1010 aa).

Ala2 carries the post-translational modification N-acetylalanine. Ser10 carries the post-translational modification Phosphoserine. One can recognise an ATP-grasp domain in the interval 111 to 318; it reads KEFMDRHGIP…LYEVIQSTLD (208 aa). ATP contacts are provided by residues 190–193, Glu197, Arg220, and Asn229; that span reads EELL. Residues Glu288 and Asn290 each contribute to the Mg(2+) site. Lys350 carries the post-translational modification N6-acetyllysine. The segment at 434-809 is AIRS domain; it reads SLTYKESGVD…HFSFEKKKAR (376 aa). At Ser440 the chain carries Phosphoserine. The residue at position 682 (Thr682) is a Phosphothreonine. Phosphoserine is present on residues Ser796 and Ser802. The GART domain stretch occupies residues 810–1010; that stretch reads VAVLISGTGS…NGKICWVKEE (201 aa). 818 to 820 provides a ligand contact to N(1)-(5-phospho-beta-D-ribosyl)glycinamide; sequence GSN. (6R)-10-formyltetrahydrofolate is bound by residues Arg871, 896 to 899, and Asn913; that span reads MRIL. The active-site Proton donor is the His915. A (6R)-10-formyltetrahydrofolate-binding site is contributed by 947–951; sequence AEDVD. Residue 977 to 980 coordinates N(1)-(5-phospho-beta-D-ribosyl)glycinamide; it reads KLAE.

This sequence in the N-terminal section; belongs to the GARS family. In the central section; belongs to the AIR synthase family. It in the C-terminal section; belongs to the GART family. In terms of assembly, homodimer. Mg(2+) serves as cofactor. Requires Mn(2+) as cofactor.

The enzyme catalyses 5-phospho-beta-D-ribosylamine + glycine + ATP = N(1)-(5-phospho-beta-D-ribosyl)glycinamide + ADP + phosphate + H(+). It catalyses the reaction N(1)-(5-phospho-beta-D-ribosyl)glycinamide + (6R)-10-formyltetrahydrofolate = N(2)-formyl-N(1)-(5-phospho-beta-D-ribosyl)glycinamide + (6S)-5,6,7,8-tetrahydrofolate + H(+). The catalysed reaction is 2-formamido-N(1)-(5-O-phospho-beta-D-ribosyl)acetamidine + ATP = 5-amino-1-(5-phospho-beta-D-ribosyl)imidazole + ADP + phosphate + H(+). It participates in purine metabolism; IMP biosynthesis via de novo pathway; 5-amino-1-(5-phospho-D-ribosyl)imidazole from N(2)-formyl-N(1)-(5-phospho-D-ribosyl)glycinamide: step 2/2. The protein operates within purine metabolism; IMP biosynthesis via de novo pathway; N(1)-(5-phospho-D-ribosyl)glycinamide from 5-phospho-alpha-D-ribose 1-diphosphate: step 2/2. Its pathway is purine metabolism; IMP biosynthesis via de novo pathway; N(2)-formyl-N(1)-(5-phospho-D-ribosyl)glycinamide from N(1)-(5-phospho-D-ribosyl)glycinamide (10-formyl THF route): step 1/1. In terms of biological role, trifunctional enzyme that catalyzes three distinct reactions as part of the 'de novo' inosine monophosphate biosynthetic pathway. This is Trifunctional purine biosynthetic protein adenosine-3 (GART) from Homo sapiens (Human).